The following is a 121-amino-acid chain: Putative iron-sulfur cluster insertion protein ErpA 1 (121 aa).

3 residues coordinate iron-sulfur cluster: cysteine 49, cysteine 113, and cysteine 115.

It belongs to the HesB/IscA family. In terms of assembly, homodimer. Iron-sulfur cluster is required as a cofactor.

Functionally, required for insertion of 4Fe-4S clusters. This is Putative iron-sulfur cluster insertion protein ErpA 1 from Polaromonas naphthalenivorans (strain CJ2).